The primary structure comprises 287 residues: MSPAFDIAPLDATFGAVVTGVKLADLDDAGWLDLQAAWLEYALLVFPDQHLTREQQIAFARRFGPLEFEMAAISNVRPDGSLRVESDNDDMMKILKGNMGWHADSTYMPVQAKGAVFSAEVVPSVGGQTGFADMRAAYDALDEDLKARVETLQARHSLHYSQSKLGHQTKAADGEYSGYGLHDGPVPLRPLVKIHPETGRKSLLIGRHAHAIPGLEPAESERLLQQLIDFACQPPRIYHHDWAPGDAVLWDNRCLLHQATPWDMTQKRIMWHSRIAGDPASETALAH.

Fe cation-binding residues include His102 and Asp104. 2-oxoglutarate is bound by residues Thr129 and Trp242. His257 lines the Fe cation pocket. Residue Arg268 participates in 2-oxoglutarate binding.

Belongs to the TfdA dioxygenase family. Monomer. The cofactor is Fe cation. L-ascorbate is required as a cofactor.

The catalysed reaction is (S)-2-(4-chloro-2-methylphenoxy)propanoate + 2-oxoglutarate + O2 = 2-methyl-4-chlorophenol + pyruvate + succinate + CO2. It carries out the reaction (S)-(2,4-dichlorophenoxy)propanoate + 2-oxoglutarate + O2 = 2,4-dichlorophenol + pyruvate + succinate + CO2. It functions in the pathway xenobiotic degradation; 2-(2,4-dichlorophenoxy)propanoate degradation. Involved in the degradation of the phenoxypropionate herbicides. Catalyzes the enantiospecific cleavage of the ether bond in the herbicid S-dichlorprop ((S)-2-(2,4-dichlorophenoxy)propionate)(S-2,4-DP) and S-mecoprop ((S)-2-(4-chloro-2-methylphenoxy)propionate)(S-2,4-MCPP). It can also accept (RS)-2-(4-chloro-2-methylphenoxy)propionate ((RS)-2,4-MCPP) and phenoxyacetate derivatives such as 2,4-dichlorophenoxyacetate (2,4-D), however it can only accept 2-oxoglutarate as oxygen acceptor. In Sphingobium herbicidovorans (strain ATCC 700291 / DSM 11019 / CCUG 56400 / KCTC 2939 / LMG 18315 / NBRC 16415 / MH) (Sphingomonas herbicidovorans), this protein is (S)-phenoxypropionate/alpha-ketoglutarate-dioxygenase.